The chain runs to 105 residues: Large ribosomal subunit protein uL23 (105 aa).

It belongs to the universal ribosomal protein uL23 family. In terms of assembly, part of the 50S ribosomal subunit. Contacts protein L29, and trigger factor when it is bound to the ribosome.

Its function is as follows. One of the early assembly proteins it binds 23S rRNA. One of the proteins that surrounds the polypeptide exit tunnel on the outside of the ribosome. Forms the main docking site for trigger factor binding to the ribosome. The sequence is that of Large ribosomal subunit protein uL23 from Ureaplasma parvum serovar 3 (strain ATCC 27815 / 27 / NCTC 11736).